The following is a 264-amino-acid chain: Transmembrane protein 270 (264 aa).

3 consecutive transmembrane segments (helical) span residues 31-51 (HLYR…LGLA), 74-94 (LSLA…LLLW), and 133-153 (LFLS…LLTW). The segment covering 227–236 (AQEVKSQETS) has biased composition (polar residues). Positions 227-264 (AQEVKSQETSGPPPQFLIPESSTTESGPLPPQPETPGE) are disordered. A compositionally biased stretch (pro residues) spans 254-264 (PLPPQPETPGE).

In terms of tissue distribution, testis.

Its subcellular location is the membrane. The protein is Transmembrane protein 270 of Mus musculus (Mouse).